The sequence spans 469 residues: MSAPRTLYDKIWDDHLVDSQDDGTCLLYIDRHLVHEVTSPQAFEGLRMAGRKVRAPEKTLAVVDHNVPTSPDRHLGIKNEESRIQVEALARNAADFGVEYYSENDKRQGIVHIVGPEQGFTLPGMTIVCGDSHTSTHGAFGALAHGIGTSEVEHVLATQTLIQKKAKNMLVRVDGQLPPGVTAKDIILAIIGEIGTAGGTGHVIEFAGEAIRSLSMEGRMTVCNMTIEGGARAGLIAPDETTFEYIKDKPRAPKGEAWDRAVEYWKTLHTDEGAHYDRVVVLDAANLPPIVSWGSSPEDVVSVQGVVPNPDDIQDETKRTSKWRALDYMGLKPGTKITDIAIDRVFIGSCTNGRIEDLRAVAEVVEGRKVAPTVSAMIVPGSGLVKEQAEAEGLDKIFKEAGFDWREPGCSMCLAMNDDRLKPGERCASTSNRNFEGRQGFKGRTHLLSPAMAAAAAVAGHFVDIREWK.

C350, C410, and C413 together coordinate [4Fe-4S] cluster.

It belongs to the aconitase/IPM isomerase family. LeuC type 1 subfamily. As to quaternary structure, heterodimer of LeuC and LeuD. [4Fe-4S] cluster serves as cofactor.

The catalysed reaction is (2R,3S)-3-isopropylmalate = (2S)-2-isopropylmalate. The protein operates within amino-acid biosynthesis; L-leucine biosynthesis; L-leucine from 3-methyl-2-oxobutanoate: step 2/4. Catalyzes the isomerization between 2-isopropylmalate and 3-isopropylmalate, via the formation of 2-isopropylmaleate. This chain is 3-isopropylmalate dehydratase large subunit, found in Rhizobium meliloti (strain 1021) (Ensifer meliloti).